Reading from the N-terminus, the 97-residue chain is UPF0235 protein PFL_5841 (97 aa).

Belongs to the UPF0235 family.

The chain is UPF0235 protein PFL_5841 from Pseudomonas fluorescens (strain ATCC BAA-477 / NRRL B-23932 / Pf-5).